Consider the following 409-residue polypeptide: G2/mitotic-specific cyclin-B (409 aa).

It belongs to the cyclin family. Cyclin AB subfamily. In terms of assembly, interacts with the CDK1 protein kinase to form a serine/threonine kinase holoenzyme complex also known as maturation promoting factor (MPF). The cyclin subunit imparts substrate specificity to the complex.

Functionally, essential for the control of the cell cycle at the G2/M (mitosis) transition. The polypeptide is G2/mitotic-specific cyclin-B (Arbacia punctulata (Punctuate sea urchin)).